The sequence spans 240 residues: Octanoyltransferase (240 aa).

A disordered region spans residues 1-22 (MGTTGTNDGATTPPANTSTPAV). Residues 10 to 21 (ATTPPANTSTPA) are compositionally biased toward low complexity. The region spanning 51-236 (EKIPDTILLL…NLVDALNGDL (186 aa)) is the BPL/LPL catalytic domain. Residues 89 to 96 (RGGRITWH), 166 to 168 (AIG), and 179 to 181 (GVA) each bind substrate. Cysteine 197 serves as the catalytic Acyl-thioester intermediate.

This sequence belongs to the LipB family.

Its subcellular location is the cytoplasm. The enzyme catalyses octanoyl-[ACP] + L-lysyl-[protein] = N(6)-octanoyl-L-lysyl-[protein] + holo-[ACP] + H(+). It participates in protein modification; protein lipoylation via endogenous pathway; protein N(6)-(lipoyl)lysine from octanoyl-[acyl-carrier-protein]: step 1/2. In terms of biological role, catalyzes the transfer of endogenously produced octanoic acid from octanoyl-acyl-carrier-protein onto the lipoyl domains of lipoate-dependent enzymes. Lipoyl-ACP can also act as a substrate although octanoyl-ACP is likely to be the physiological substrate. In Corynebacterium jeikeium (strain K411), this protein is Octanoyltransferase.